Consider the following 371-residue polypeptide: Gustatory receptor-like 65a (371 aa).

Residues 1-13 lie on the Cytoplasmic side of the membrane; it reads MREVNLLNRFTRQ. The chain crosses the membrane as a helical span at residues 14 to 34; the sequence is FLFLIVLVTQICGVATFVYNS. Topologically, residues 35–42 are extracellular; that stretch reads KAQCFRQS. The helical transmembrane segment at 43–63 threads the bilayer; that stretch reads GFLRFYSSLVLIFLALFLIVT. The Cytoplasmic portion of the chain corresponds to 64 to 72; sequence TSKMFHNLQ. The chain crosses the membrane as a helical span at residues 73-93; sequence AVWPYVVGSVIILVVRIHGLL. At 94-126 the chain is on the extracellular side; it reads ESAEIVELLNQMLRIMRQVNLMARHPNLFRLKH. Residues 127 to 147 form a helical membrane-spanning segment; that stretch reads LLLLLLALQNLLRSLNTIVGI. Over 148–161 the chain is Cytoplasmic; the sequence is SNHSAEAYDSFLNS. A helical membrane pass occupies residues 162–182; the sequence is VILLIILAVLLSFLLQITINI. Topologically, residues 183–251 are extracellular; the sequence is CLFVVLIATY…FHITVRIIRH (69 aa). The chain crosses the membrane as a helical span at residues 252–272; it reads FRFHWLCAIIYGLLPFFSLTA. Topologically, residues 273–277 are cytoplasmic; that stretch reads KDQNG. The helical transmembrane segment at 278–298 threads the bilayer; it reads FNFLIISALNIIFQWTIFAIL. Residues 299 to 371 are Extracellular-facing; that stretch reads SRESRITRSL…FVNRLEYLHI (73 aa).

Its subcellular location is the cell membrane. The chain is Gustatory receptor-like 65a from Drosophila melanogaster (Fruit fly).